A 621-amino-acid chain; its full sequence is uncharacterized protein (621 aa).

Disordered regions lie at residues 92-134 and 268-310; these read FRNS…QINQ and KINH…DDEI. Positions 94–134 are enriched in low complexity; sequence NSSNQSSQSNQVNQSNQSSPSSQISPSSQVNKFNQSSQINQ. Positions 296 to 310 are enriched in acidic residues; sequence TNDETNDETDNDDEI. A coiled-coil region spans residues 354–401; it reads ANKIQNKIIQIVETLNAYKNKQSQIAIEAKNKIKHITVSNKEVSENIE.

This is an uncharacterized protein from Acanthamoeba polyphaga mimivirus (APMV).